A 234-amino-acid chain; its full sequence is Small ribosomal subunit protein eS4 (234 aa).

Residues 43–106 (MPIAVWLRDY…NEYYRVLLDE (64 aa)) enclose the S4 RNA-binding domain.

The protein belongs to the eukaryotic ribosomal protein eS4 family.

The protein is Small ribosomal subunit protein eS4 of Nanoarchaeum equitans (strain Kin4-M).